A 765-amino-acid chain; its full sequence is Ubiquitin-like modifier-activating enzyme atg7 (765 aa).

The short motif at 436 to 441 (GAGTLG) is the GXGXXG motif element. Cys616 serves as the catalytic Glycyl thioester intermediate. Disordered regions lie at residues 646–670 (AAPAPKLSSNHQSGQLEFDRDPPNH) and 744–765 (AANDVEWDSDEEGMEDEEPELL). The homodimerization stretch occupies residues 721-760 (ALTEKDYITELSGLAEVQRKAEAAANDVEWDSDEEGMEDE). Residues 748 to 765 (VEWDSDEEGMEDEEPELL) show a composition bias toward acidic residues.

The protein belongs to the ATG7 family. Homodimer. Interacts with ATG8 through a thioester bond between Cys-616 and the C-terminal Gly of ATG8 and with ATG12 through a thioester bond between Cys-616 and the C-terminal Gly of ATG12. Also interacts with ATG3.

The protein localises to the cytoplasm. It is found in the preautophagosomal structure. Functionally, E1-like activating enzyme involved in the 2 ubiquitin-like systems required for cytoplasm to vacuole transport (Cvt) and autophagy. Activates ATG12 for its conjugation with ATG5 and ATG8 for its conjugation with phosphatidylethanolamine. Both systems are needed for the ATG8 association to Cvt vesicles and autophagosomes membranes. Autophagy is essential for maintenance of amino acid levels and protein synthesis under nitrogen starvation. Required for selective autophagic degradation of the nucleus (nucleophagy) as well as for mitophagy which contributes to regulate mitochondrial quantity and quality by eliminating the mitochondria to a basal level to fulfill cellular energy requirements and preventing excess ROS production. Required for normal mycelial growth and conidiogenesis, and regulates sclerotial formation. Plays an essential role in pathogenesis. The chain is Ubiquitin-like modifier-activating enzyme atg7 from Botryotinia fuckeliana (strain BcDW1) (Noble rot fungus).